We begin with the raw amino-acid sequence, 79 residues long: Short neurotoxin 6 (79 aa).

The first 21 residues, 1-21, serve as a signal peptide directing secretion; the sequence is MKTLLLTLVMVTIMCLDLGYT. 4 disulfide bridges follow: Cys24-Cys41, Cys34-Cys59, Cys63-Cys71, and Cys72-Cys77.

It belongs to the three-finger toxin family. Short-chain subfamily. Type III alpha-neurotoxin sub-subfamily. In terms of tissue distribution, expressed by the venom gland.

It localises to the secreted. Functionally, binds with high affinity to muscle nicotinic acetylcholine receptor (nAChR) and hinders acetylcholine binding to the receptor, thereby impairing neuromuscular transmission. Competes with the binding of alpha-bungarotoxin on muscle AChR (from Torpedo) with an IC(50) of 0.18 uM. Causes muscle paralysis, spasms and increased respiration. The polypeptide is Short neurotoxin 6 (Pseudonaja textilis (Eastern brown snake)).